The sequence spans 154 residues: Putative esterase AF_2264 (154 aa).

The protein belongs to the thioesterase PaaI family.

The polypeptide is Putative esterase AF_2264 (Archaeoglobus fulgidus (strain ATCC 49558 / DSM 4304 / JCM 9628 / NBRC 100126 / VC-16)).